A 311-amino-acid polypeptide reads, in one-letter code: Malate dehydrogenase (311 aa).

Residues 7 to 13 (GAAGGIG) and Asp-34 contribute to the NAD(+) site. Residues Arg-81 and Arg-87 each contribute to the substrate site. NAD(+)-binding positions include Asn-94 and 117 to 119 (ITN). Positions 119 and 153 each coordinate substrate. His-177 (proton acceptor) is an active-site residue. Met-227 contributes to the NAD(+) binding site.

The protein belongs to the LDH/MDH superfamily. MDH type 1 family. As to quaternary structure, homodimer.

It carries out the reaction (S)-malate + NAD(+) = oxaloacetate + NADH + H(+). Its function is as follows. Catalyzes the reversible oxidation of malate to oxaloacetate. The sequence is that of Malate dehydrogenase from Haemophilus influenzae (strain PittEE).